Reading from the N-terminus, the 168-residue chain is NADH-quinone oxidoreductase subunit I (168 aa).

2 4Fe-4S ferredoxin-type domains span residues L58 to Q88 and V99 to N128. The [4Fe-4S] cluster site is built by C68, C71, C74, C78, C108, C111, C114, and C118.

The protein belongs to the complex I 23 kDa subunit family. In terms of assembly, NDH-1 is composed of 14 different subunits. Subunits NuoA, H, J, K, L, M, N constitute the membrane sector of the complex. It depends on [4Fe-4S] cluster as a cofactor.

Its subcellular location is the cell inner membrane. The enzyme catalyses a quinone + NADH + 5 H(+)(in) = a quinol + NAD(+) + 4 H(+)(out). Its function is as follows. NDH-1 shuttles electrons from NADH, via FMN and iron-sulfur (Fe-S) centers, to quinones in the respiratory chain. The immediate electron acceptor for the enzyme in this species is believed to be ubiquinone. Couples the redox reaction to proton translocation (for every two electrons transferred, four hydrogen ions are translocated across the cytoplasmic membrane), and thus conserves the redox energy in a proton gradient. This is NADH-quinone oxidoreductase subunit I from Ehrlichia ruminantium (strain Gardel).